Reading from the N-terminus, the 75-residue chain is Pro-glucagon (75 aa).

It belongs to the glucagon family.

The protein resides in the secreted. Functionally, plays a key role in glucose metabolism and homeostasis. Regulates blood glucose by increasing gluconeogenesis and decreasing glycolysis. This is Pro-glucagon (gcg) from Amia calva (Bowfin).